The following is a 468-amino-acid chain: Tyramine receptor tyra-2 (468 aa).

The Extracellular portion of the chain corresponds to Met1–Ser23. The chain crosses the membrane as a helical span at residues Ala24–Leu43. Topologically, residues Tyr44–Asn54 are cytoplasmic. A helical transmembrane segment spans residues Leu55–Val77. At Tyr78–Cys91 the chain is on the extracellular side. Residues Cys91 and Cys177 are joined by a disulfide bond. The helical transmembrane segment at Glu92–Leu114 threads the bilayer. Over Asp115 to Thr134 the chain is Cytoplasmic. The helical transmembrane segment at Ala135–Trp157 threads the bilayer. Residues Lys158 to Thr186 lie on the Extracellular side of the membrane. Asn171 carries N-linked (GlcNAc...) asparagine glycosylation. A helical transmembrane segment spans residues Val187–Tyr209. The Cytoplasmic segment spans residues Gln210 to Lys387. A disordered region spans residues Asp252–Thr306. Acidic residues-rich tracts occupy residues Ala255 to Glu265 and Ile281 to Ser292. The chain crosses the membrane as a helical span at residues Val388 to Val410. Residues Gln411 to Met424 are Extracellular-facing. Residues Phe425 to Phe444 form a helical membrane-spanning segment. Topologically, residues Asn445 to Val468 are cytoplasmic.

This sequence belongs to the G-protein coupled receptor 1 family. Expressed in the pharyngeal neurons, MCL/R and NSML/R and the AS group of amphidial sensory neurons, ASEL/R, AGSL/R, ASHL/R and ASIL/R.

The protein resides in the cell membrane. G-protein coupled receptor for tyramine, a known neurotransmitter and neuromodulator and direct precursor of octopamine. Expression in amphidial sensory neurons suggests a role in chemosensation. The chain is Tyramine receptor tyra-2 (tyra-2) from Caenorhabditis elegans.